Here is a 642-residue protein sequence, read N- to C-terminus: MHQVVTVKAEKVPMGKRLRRCKQEAENQQKVEEVAEKLEKEHEGLIEFHKSYHELFQFFCNNTTIHGAIRLVCSKRNKMKTAFWSVLFFLTFGLMYWQFGILYREYFSFPVNLNLNLNSDKLTFPAVTLCTLNPYRYSAVRKELDELDRITHQTLMDLYNYSMSQVQSNGAAQSSQKRSQRSLSHHVQRHPLRRRKRNEPVSLKGNSPPVDKSDWKIGFILCNETNEDCFHQTYSSGVDAVREWYSFHYINILARMPDTKALDESNFESFIYACRFNEVTCDKANYTHFHHPLYGNCYTFNDRNNSLWTSSLPGINNGLSLLVRTEQNDYIPLLSTVTGARVMVHEQNEPAFMDDGGFNVRPGIETSISMRKETTMLLGGSYSDCTEDGSDVPVQNLYSSRYTEQVCIRSCFQIHMVKRCGCAYYFYPLPPGAEYCDYTKHIAWGYCYYKLQVEFKSNILGCFSKCRKPCEVTKYQLSAGYSHWPSAVSENWVFHILSQQNKYNITSKRNGVAKVNIFFEEWKYKTNGESPAFTVVTLLSQLGNQWSLWFGSSVLSVVELAELILDFIAITIILSFKRFRSRQVPAPSVPPPGAHDNTAFQSEPADPSAPHRFTVEAVVTTLPSYNSLEPCRRDGEAVIGLE.

Over 1–81 (MHQVVTVKAE…VCSKRNKMKT (81 aa)) the chain is Cytoplasmic. The helical transmembrane segment at 82 to 102 (AFWSVLFFLTFGLMYWQFGIL) threads the bilayer. The Extracellular segment spans residues 103–553 (YREYFSFPVN…NQWSLWFGSS (451 aa)). 10 disulfide bridges follow: Cys-130/Cys-297, Cys-222/Cys-229, Cys-274/Cys-281, Cys-385/Cys-470, Cys-407/Cys-447, Cys-407/Cys-466, Cys-411/Cys-462, Cys-420/Cys-447, Cys-420/Cys-470, and Cys-422/Cys-436. The disordered stretch occupies residues 170–209 (GAAQSSQKRSQRSLSHHVQRHPLRRRKRNEPVSLKGNSPP). The span at 178 to 197 (RSQRSLSHHVQRHPLRRRKR) shows a compositional bias: basic residues. Residues 554–574 (VLSVVELAELILDFIAITIIL) traverse the membrane as a helical segment. Residues 575–642 (SFKRFRSRQV…RDGEAVIGLE (68 aa)) lie on the Cytoplasmic side of the membrane. The tract at residues 587 to 608 (PSVPPPGAHDNTAFQSEPADPS) is disordered.

This sequence belongs to the amiloride-sensitive sodium channel (TC 1.A.6) family. SCNN1A subfamily. As to quaternary structure, heterotrimer; disulfide-linked and containing an alpha/SCNN1A, a beta/SCNN1B and a gamma/SCNN1G subunit.

The protein resides in the apical cell membrane. It is found in the cell projection. It localises to the cilium. The protein localises to the cytoplasmic granule. Its subcellular location is the cytoplasm. The protein resides in the cytoplasmic vesicle. It is found in the secretory vesicle. It localises to the acrosome. The protein localises to the flagellum. The enzyme catalyses Na(+)(in) = Na(+)(out). Originally identified and characterized by its inhibition by the diuretic drug amiloride. Functionally, this is one of the three pore-forming subunits of the heterotrimeric epithelial sodium channel (ENaC), a critical regulator of sodium balance and fluid homeostasis. ENaC operates in epithelial tissues, where it mediates the electrodiffusion of sodium ions from extracellular fluid through the apical membrane of cells, with water following osmotically. The chain is Epithelial sodium channel subunit alpha from Pelodiscus sinensis (Chinese softshell turtle).